A 360-amino-acid polypeptide reads, in one-letter code: Methylthioribose-1-phosphate isomerase (360 aa).

The active-site Proton donor is the Asp-252.

This sequence belongs to the eIF-2B alpha/beta/delta subunits family. MtnA subfamily.

It localises to the cytoplasm. The protein localises to the nucleus. The catalysed reaction is 5-(methylsulfanyl)-alpha-D-ribose 1-phosphate = 5-(methylsulfanyl)-D-ribulose 1-phosphate. It functions in the pathway amino-acid biosynthesis; L-methionine biosynthesis via salvage pathway; L-methionine from S-methyl-5-thio-alpha-D-ribose 1-phosphate: step 1/6. Functionally, catalyzes the interconversion of methylthioribose-1-phosphate (MTR-1-P) into methylthioribulose-1-phosphate (MTRu-1-P). This is Methylthioribose-1-phosphate isomerase from Trichoplax adhaerens (Trichoplax reptans).